The sequence spans 303 residues: Dihydroorotate dehydrogenase B (NAD(+)), catalytic subunit (303 aa).

FMN-binding positions include Ser23 and 47 to 48 (KS). Residues Lys47, 71–75 (NAMGL), and Asn125 each bind substrate. Asn125 contributes to the FMN binding site. The Nucleophile role is filled by Cys128. Positions 163 and 189 each coordinate FMN. Substrate is bound at residue 190 to 191 (NT). FMN-binding positions include Gly215, 241-242 (GG), and 263-264 (GT).

It belongs to the dihydroorotate dehydrogenase family. Type 1 subfamily. Heterotetramer of 2 PyrK and 2 PyrD type B subunits. FMN is required as a cofactor.

Its subcellular location is the cytoplasm. The enzyme catalyses (S)-dihydroorotate + NAD(+) = orotate + NADH + H(+). The protein operates within pyrimidine metabolism; UMP biosynthesis via de novo pathway; orotate from (S)-dihydroorotate (NAD(+) route): step 1/1. Functionally, catalyzes the conversion of dihydroorotate to orotate with NAD(+) as electron acceptor. This chain is Dihydroorotate dehydrogenase B (NAD(+)), catalytic subunit (pyrD), found in Pyrococcus horikoshii (strain ATCC 700860 / DSM 12428 / JCM 9974 / NBRC 100139 / OT-3).